A 505-amino-acid chain; its full sequence is Catalase (505 aa).

Residues histidine 58 and asparagine 131 contribute to the active site. Tyrosine 341 provides a ligand contact to heme.

The protein belongs to the catalase family. Requires heme as cofactor.

It carries out the reaction 2 H2O2 = O2 + 2 H2O. Functionally, decomposes hydrogen peroxide into water and oxygen; serves to protect cells from the toxic effects of hydrogen peroxide. The polypeptide is Catalase (kat) (Methanosarcina barkeri (strain Fusaro / DSM 804)).